A 449-amino-acid chain; its full sequence is Phosphoglucosamine mutase (449 aa).

Catalysis depends on S99, which acts as the Phosphoserine intermediate. Mg(2+)-binding residues include S99, D239, D241, and D243. S99 bears the Phosphoserine mark.

Belongs to the phosphohexose mutase family. Mg(2+) serves as cofactor. Post-translationally, activated by phosphorylation.

The catalysed reaction is alpha-D-glucosamine 1-phosphate = D-glucosamine 6-phosphate. Catalyzes the conversion of glucosamine-6-phosphate to glucosamine-1-phosphate. This is Phosphoglucosamine mutase from Finegoldia magna (strain ATCC 29328 / DSM 20472 / WAL 2508) (Peptostreptococcus magnus).